The sequence spans 552 residues: Non-structural protein NS1 (552 aa).

It belongs to the orbivirus non-structural protein NS1 family.

This chain is Non-structural protein NS1 (Segment-5), found in Antilocapra americana (Pronghorn).